A 262-amino-acid polypeptide reads, in one-letter code: ATP synthase subunit a 1 (262 aa).

Helical transmembrane passes span 30–50, 91–111, 131–151, 201–221, and 232–252; these read TVHI…ILVF, IAPL…MDLI, IVPT…FALM, LFGN…LMPW, and AIFH…LTIV.

This sequence belongs to the ATPase A chain family. As to quaternary structure, F-type ATPases have 2 components, CF(1) - the catalytic core - and CF(0) - the membrane proton channel. CF(1) has five subunits: alpha(3), beta(3), gamma(1), delta(1), epsilon(1). CF(0) has three main subunits: a(1), b(2) and c(9-12). The alpha and beta chains form an alternating ring which encloses part of the gamma chain. CF(1) is attached to CF(0) by a central stalk formed by the gamma and epsilon chains, while a peripheral stalk is formed by the delta and b chains.

It localises to the cell inner membrane. Key component of the proton channel; it plays a direct role in the translocation of protons across the membrane. The sequence is that of ATP synthase subunit a 1 from Photobacterium profundum (strain SS9).